The chain runs to 145 residues: Basic phospholipase A2 PC17 (145 aa).

Positions 1–21 are cleaved as a signal peptide; the sequence is MYPAHLLLLLAVCVSLLGASA. A propeptide spanning residues 22 to 27 is cleaved from the precursor; the sequence is IPPLPL. 7 disulfide bridges follow: Cys38-Cys98, Cys54-Cys144, Cys56-Cys72, Cys71-Cys125, Cys78-Cys118, Cys87-Cys111, and Cys105-Cys116. The Ca(2+) site is built by Tyr55, Gly57, and Gly59. The active site involves His75. Asp76 lines the Ca(2+) pocket. Residue Asp119 is part of the active site.

This sequence belongs to the phospholipase A2 family. Group I subfamily. D49 sub-subfamily. It depends on Ca(2+) as a cofactor.

The protein resides in the secreted. It carries out the reaction a 1,2-diacyl-sn-glycero-3-phosphocholine + H2O = a 1-acyl-sn-glycero-3-phosphocholine + a fatty acid + H(+). In terms of biological role, PLA2 catalyzes the calcium-dependent hydrolysis of the 2-acyl groups in 3-sn-phosphoglycerides. The chain is Basic phospholipase A2 PC17 from Laticauda laticaudata (Blue-ringed sea krait).